The sequence spans 462 residues: tRNA modification GTPase MnmE (462 aa).

(6S)-5-formyl-5,6,7,8-tetrahydrofolate is bound by residues Arg27, Glu89, and Arg128. The TrmE-type G domain maps to 224-383 (GLATAIVGRP…LEAQIAKLFF (160 aa)). Asn234 lines the K(+) pocket. Residues 234 to 239 (NVGKSS), 253 to 259 (TDVAGTT), and 278 to 281 (DTAG) each bind GTP. Residue Ser238 participates in Mg(2+) binding. Thr253, Val255, and Thr258 together coordinate K(+). A Mg(2+)-binding site is contributed by Thr259. Residue Lys462 participates in (6S)-5-formyl-5,6,7,8-tetrahydrofolate binding.

It belongs to the TRAFAC class TrmE-Era-EngA-EngB-Septin-like GTPase superfamily. TrmE GTPase family. In terms of assembly, homodimer. Heterotetramer of two MnmE and two MnmG subunits. It depends on K(+) as a cofactor.

It is found in the cytoplasm. Its function is as follows. Exhibits a very high intrinsic GTPase hydrolysis rate. Involved in the addition of a carboxymethylaminomethyl (cmnm) group at the wobble position (U34) of certain tRNAs, forming tRNA-cmnm(5)s(2)U34. The chain is tRNA modification GTPase MnmE from Latilactobacillus sakei subsp. sakei (strain 23K) (Lactobacillus sakei subsp. sakei).